Reading from the N-terminus, the 187-residue chain is Protein GrpE (187 aa).

The protein belongs to the GrpE family. Homodimer.

The protein resides in the cytoplasm. Functionally, participates actively in the response to hyperosmotic and heat shock by preventing the aggregation of stress-denatured proteins, in association with DnaK and GrpE. It is the nucleotide exchange factor for DnaK and may function as a thermosensor. Unfolded proteins bind initially to DnaJ; upon interaction with the DnaJ-bound protein, DnaK hydrolyzes its bound ATP, resulting in the formation of a stable complex. GrpE releases ADP from DnaK; ATP binding to DnaK triggers the release of the substrate protein, thus completing the reaction cycle. Several rounds of ATP-dependent interactions between DnaJ, DnaK and GrpE are required for fully efficient folding. This chain is Protein GrpE, found in Albidiferax ferrireducens (strain ATCC BAA-621 / DSM 15236 / T118) (Rhodoferax ferrireducens).